Consider the following 442-residue polypeptide: Endothelin receptor type B (442 aa).

The signal sequence occupies residues 1–26; sequence MQPPPSLCGRALVALVLACGLSRIWG. At 27 to 101 the chain is on the extracellular side; that stretch reads EERGFPPDRA…GSIEIKETFK (75 aa). An N-linked (GlcNAc...) asparagine glycan is attached at Asn59. The interval 69–88 is disordered; it reads AEVPKGDRTAGSPPRTISPP. Residues 102–126 traverse the membrane as a helical segment; the sequence is YINTVVSCLVFVLGIIGNSTLLRII. Topologically, residues 127–137 are cytoplasmic; sequence YKNKCMRNGPN. Residues 138–163 traverse the membrane as a helical segment; that stretch reads ILIASLALGDLLHIIIDIPITVYKLL. Topologically, residues 164–175 are extracellular; the sequence is AEDWPFGVEMCK. Cysteines 174 and 255 form a disulfide. Residues 176–197 form a helical membrane-spanning segment; it reads LVPFIQKASVGITVLSLCALSI. Over 198–218 the chain is Cytoplasmic; sequence DRYRAVASWSRIKGIGVPKWT. Residues 219 to 243 traverse the membrane as a helical segment; it reads AVEIVLIWVVSVVLAVPEAVGFDMI. Residues 244-271 lie on the Extracellular side of the membrane; sequence TIDYKGRYLRICLLHPTQKTAFMQFYKT. The helical transmembrane segment at 272–296 threads the bilayer; it reads AKDWWLFSFYFCLPLAITAFFYTLM. Residues 297-324 are Cytoplasmic-facing; the sequence is TCEMLRKKSGMQIALNDHLKQRREVAKT. Ser305 bears the Phosphoserine mark. Residues 325–350 traverse the membrane as a helical segment; the sequence is VFCLVLVFALCWLPLHLSRILKLTIY. Topologically, residues 351–362 are extracellular; that stretch reads DQNDPNRCELLS. Residues 363–389 form a helical membrane-spanning segment; the sequence is FLLVLDYIGINMASLNSCINPIALYLV. Residues 390 to 442 lie on the Cytoplasmic side of the membrane; sequence SKRFKNCFKSCLCCWCQSFEEKQSLEEKQSCLKFKANDHGYDNFRSSNKYSSS. Residues Cys402, Cys403, and Cys405 are each lipidated (S-palmitoyl cysteine). Ser419 is subject to Phosphoserine. Position 439 is a phosphotyrosine (Tyr439). Phosphoserine is present on residues Ser440, Ser441, and Ser442.

It belongs to the G-protein coupled receptor 1 family. Endothelin receptor subfamily. EDNRB sub-subfamily.

Its subcellular location is the cell membrane. In terms of biological role, non-specific receptor for endothelin 1, 2, and 3. Mediates its action by association with G proteins that activate a phosphatidylinositol-calcium second messenger system. This Canis lupus familiaris (Dog) protein is Endothelin receptor type B (EDNRB).